Reading from the N-terminus, the 169-residue chain is Sec-independent protein translocase protein TatB (169 aa).

Residues Met-1 to Gly-21 form a helical membrane-spanning segment. Residues Glu-98 to Arg-169 are disordered. Over residues Pro-134–Ala-143 the composition is skewed to basic and acidic residues. The segment covering Ser-146–Arg-169 has biased composition (polar residues).

This sequence belongs to the TatB family. As to quaternary structure, the Tat system comprises two distinct complexes: a TatABC complex, containing multiple copies of TatA, TatB and TatC subunits, and a separate TatA complex, containing only TatA subunits. Substrates initially bind to the TatABC complex, which probably triggers association of the separate TatA complex to form the active translocon.

Its subcellular location is the cell inner membrane. Part of the twin-arginine translocation (Tat) system that transports large folded proteins containing a characteristic twin-arginine motif in their signal peptide across membranes. Together with TatC, TatB is part of a receptor directly interacting with Tat signal peptides. TatB may form an oligomeric binding site that transiently accommodates folded Tat precursor proteins before their translocation. In Saccharophagus degradans (strain 2-40 / ATCC 43961 / DSM 17024), this protein is Sec-independent protein translocase protein TatB.